The following is a 159-amino-acid chain: Small ribosomal subunit protein uS7c (159 aa).

The tract at residues 137–159 (HAIRKKEETHKMAESNRAXAHYR) is disordered. Positions 141–150 (KKEETHKMAE) are enriched in basic and acidic residues.

This sequence belongs to the universal ribosomal protein uS7 family. As to quaternary structure, part of the 30S ribosomal subunit.

Its subcellular location is the plastid. The protein resides in the chloroplast. Functionally, one of the primary rRNA binding proteins, it binds directly to 16S rRNA where it nucleates assembly of the head domain of the 30S subunit. The chain is Small ribosomal subunit protein uS7c (rps7) from Sciadopitys verticillata (Japanese umbrella-pine).